We begin with the raw amino-acid sequence, 173 residues long: Peptidoglycan-associated lipoprotein (173 aa).

Residues M1–A21 form the signal peptide. C22 is lipidated: N-palmitoyl cysteine. The S-diacylglycerol cysteine moiety is linked to residue C22. Residues N30 to A58 are disordered. Over residues G35 to G50 the composition is skewed to gly residues. One can recognise an OmpA-like domain in the interval L60–Y173.

Belongs to the Pal lipoprotein family. As to quaternary structure, the Tol-Pal system is composed of five core proteins: the inner membrane proteins TolA, TolQ and TolR, the periplasmic protein TolB and the outer membrane protein Pal. They form a network linking the inner and outer membranes and the peptidoglycan layer.

The protein resides in the cell outer membrane. Part of the Tol-Pal system, which plays a role in outer membrane invagination during cell division and is important for maintaining outer membrane integrity. In Escherichia coli O157:H7, this protein is Peptidoglycan-associated lipoprotein.